Here is a 557-residue protein sequence, read N- to C-terminus: Estrogen receptor beta (557 aa).

The modulating stretch occupies residues 1 to 154 (MMAAASSPEK…SSGGKADLHY (154 aa)). 2 NR C4-type zinc fingers span residues 155 to 175 (CAVC…CEGC) and 191 to 215 (CPAT…LRKC). Positions 155 to 220 (CAVCHDYASG…RLRKCYEVGM (66 aa)) form a DNA-binding region, nuclear receptor. A disordered region spans residues 240–268 (LTRLSSQGKTAEPKGITGPAEGSLNKPEK). Residues 272–508 (TPEQLIERIL…DLLLEMLDAH (237 aa)) enclose the NR LBD domain. Residues 513-557 (SCLPHQPPQQDSKDQSEVPAPLHSSAGGPSNTWTPSSARAGGESQ) form a disordered region. The span at 539-557 (GGPSNTWTPSSARAGGESQ) shows a compositional bias: polar residues.

This sequence belongs to the nuclear hormone receptor family. NR3 subfamily. In terms of assembly, binds DNA as a homodimer. Can form a heterodimer with ER-alpha.

The protein resides in the nucleus. In terms of biological role, binds estrogens with an affinity similar to that of ER-alpha, and activates expression of reporter genes containing estrogen response elements (ERE) in an estrogen-dependent manner. This chain is Estrogen receptor beta (esr2), found in Oreochromis niloticus (Nile tilapia).